We begin with the raw amino-acid sequence, 226 residues long: MVKYLSQSEAIELDLDLFEMFHVGQLMELAGLSCADAVAECFPAQTHPRVLVVCGPGNNGGDGLVCARHLSLMGYQPTVYYPKPTLMSLYENLTNQCHHMEIPSVKKCPSVSDAEEDYDLILDALFGFGFKPPVREDFVPLVKMMQETKVPIASVDIPSGWDVEKGKQSECDFEPKLLISLTAPKLCAEHFKGEHHYLGGRFVPPALQRKYQLNLPDYGSKLVVRL.

Residues 10 to 215 (AIELDLDLFE…ALQRKYQLNL (206 aa)) enclose the YjeF N-terminal domain. 58 to 62 (NNGGD) is a binding site for (6S)-NADPHX. K(+)-binding residues include Asn59 and Asp123. (6S)-NADPHX-binding positions include 127–133 (GFGFKPP) and Asp156. Residue Ser159 participates in K(+) binding.

It belongs to the NnrE/AIBP family. Requires K(+) as cofactor.

It catalyses the reaction (6R)-NADHX = (6S)-NADHX. The catalysed reaction is (6R)-NADPHX = (6S)-NADPHX. In terms of biological role, catalyzes the epimerization of the S- and R-forms of NAD(P)HX, a damaged form of NAD(P)H that is a result of enzymatic or heat-dependent hydration. This is a prerequisite for the S-specific NAD(P)H-hydrate dehydratase to allow the repair of both epimers of NAD(P)HX. In Drosophila pseudoobscura pseudoobscura (Fruit fly), this protein is NAD(P)H-hydrate epimerase.